The sequence spans 443 residues: 3-ketoacyl-CoA thiolase 1, peroxisomal (443 aa).

The transit peptide at 1-30 directs the protein to the peroxisome; sequence MEKATERQRILLRHLQPSSSSDASLSASAC. C130 acts as the Acyl-thioester intermediate in catalysis. Residues H385 and C417 each act as proton acceptor in the active site.

It belongs to the thiolase-like superfamily. Thiolase family. As to quaternary structure, homodimer. As to expression, low levels in seedlings and leaves.

The protein localises to the peroxisome. It catalyses the reaction an acyl-CoA + acetyl-CoA = a 3-oxoacyl-CoA + CoA. The protein operates within lipid metabolism; fatty acid metabolism. Involved in fatty-acid beta-oxidation prior to gluconeogenesis during germination and subsequent seedling growth. Implicated in jasmonic acid (JA) biosynthesis. The protein is 3-ketoacyl-CoA thiolase 1, peroxisomal (KAT1) of Arabidopsis thaliana (Mouse-ear cress).